Reading from the N-terminus, the 388-residue chain is MNIHEYQGKEIFRSMGVAVPEGRVAFTAEEAVEKAKELDTEIYVVKAQIHAGGRGKAGGVKIAKSLSEVETYANELLGKQLVTHQTGPEGKEVKRLYIEQGCDIQKEYYVGFVIDRATDRITLMASEEGGTEIEEVAAKTPEKIFKETIDPVVGLSPYQARRIAFNINIPKESINKAAKFLISLYNVFIEKDCSIVEINPLVTTGEGEVLALDAKINFDDNALFRHKDIQELRDLEEEDPKEIEASKYDLSYIALDGDIGCMVNGAGLAMATMDTINHFGGNPANFLDVGGGATKEKVTEAFKIILGDDNVKGIFVNIFGGIMKCDVIAEGIVAAVKEVELTLPLVVRLEGTNVERGKEILNESGLAIEPAATMAEGAQKIVKLVKEA.

The 236-residue stretch at 9-244 folds into the ATP-grasp domain; sequence KEIFRSMGVA…LEEEDPKEIE (236 aa). Residues Lys46, 53–55, Glu99, Cys102, and Glu107 contribute to the ATP site; that span reads GRG. Residues Asn199 and Asp213 each contribute to the Mg(2+) site. Substrate contacts are provided by residues Asn264 and 321–323; that span reads GIM.

Belongs to the succinate/malate CoA ligase beta subunit family. As to quaternary structure, heterotetramer of two alpha and two beta subunits. The cofactor is Mg(2+).

It carries out the reaction succinate + ATP + CoA = succinyl-CoA + ADP + phosphate. The enzyme catalyses GTP + succinate + CoA = succinyl-CoA + GDP + phosphate. The protein operates within carbohydrate metabolism; tricarboxylic acid cycle; succinate from succinyl-CoA (ligase route): step 1/1. Its function is as follows. Succinyl-CoA synthetase functions in the citric acid cycle (TCA), coupling the hydrolysis of succinyl-CoA to the synthesis of either ATP or GTP and thus represents the only step of substrate-level phosphorylation in the TCA. The beta subunit provides nucleotide specificity of the enzyme and binds the substrate succinate, while the binding sites for coenzyme A and phosphate are found in the alpha subunit. This is Succinate--CoA ligase [ADP-forming] subunit beta from Staphylococcus haemolyticus (strain JCSC1435).